Consider the following 1483-residue polypeptide: Protein ORF C (1483 aa).

Disordered regions lie at residues 135–268 (LNDR…GRPP), 306–334 (VPYQ…LRPV), 383–506 (RRRA…FKRH), 518–653 (SIDD…DRNR), 680–911 (RQRR…TSVS), 949–976 (SSDD…RGGS), 1013–1061 (ALQQ…TDLI), and 1089–1299 (FSVA…QPSD). Positions 141-153 (AAGSAQRGSAGSR) are enriched in low complexity. The segment covering 157 to 170 (DNLTPTAADTTGAQ) has biased composition (polar residues). Low complexity-rich tracts occupy residues 190 to 206 (ASNV…RRQQ) and 220 to 251 (ARQQ…TTAT). Residues 252 to 264 (RQVFEQQGPSTIQ) are compositionally biased toward polar residues. Composition is skewed to low complexity over residues 424 to 449 (SGQS…TTGT), 474 to 483 (SNEPSRQSQS), and 529 to 541 (TMTQ…STTR). A compositionally biased stretch (polar residues) spans 596–607 (GSVTTTQPSGQL). Residues 609 to 621 (SDDRGRPAPERRQ) are compositionally biased toward basic and acidic residues. Residues 622–640 (QPTSRQTVAQTNIIPNTSG) are compositionally biased toward polar residues. The span at 680-689 (RQRRETEAEH) shows a compositional bias: basic and acidic residues. Residues 699–710 (TGVTPQRSNNPF) show a composition bias toward polar residues. Positions 740 to 749 (SLREYRRRDP) are enriched in basic and acidic residues. The segment covering 754–774 (GRSYTDGSTTSDGDSSDNSWS) has biased composition (low complexity). Polar residues predominate over residues 841 to 876 (NLKSPSPRTKLTRSSSLKSPGTTTRDTQQTSHPLTR). Over residues 894–909 (DSGGSSDGNTGSSQTS) the composition is skewed to low complexity. 2 stretches are compositionally biased toward polar residues: residues 1096–1109 (GSTS…SSIP) and 1116–1125 (GPSTMTSQSV). Low complexity predominate over residues 1148-1158 (SQSQPSSEQPA). The span at 1188–1202 (QPQSTVTNTQTQDVL) shows a compositional bias: polar residues. 2 stretches are compositionally biased toward low complexity: residues 1204 to 1226 (SQGS…KTGS) and 1233 to 1251 (KSAL…SGKS). Polar residues predominate over residues 1258-1276 (AASSTDPTTKPTRKVSINA). The segment covering 1284-1299 (KSSTKQSTKTSTQPSD) has biased composition (low complexity). Positions 1408–1438 (AEQIRNLEVDELKILRQQVRERIANERQQQD) form a coiled coil. Residues 1454 to 1483 (DMLVSEESAAPTPLPMDTGRFTPKSDVDMS) are disordered.

The polypeptide is Protein ORF C (Elephantid herpesvirus 1 (isolate Asian elephant/Berlin/Kiba/1998) (EIHV-1)).